The primary structure comprises 327 residues: Malate dehydrogenase (327 aa).

NAD(+)-binding positions include 20 to 25 (GAGRVG) and aspartate 44. Positions 93 and 99 each coordinate substrate. Residues asparagine 106 and 129-131 (VTN) each bind NAD(+). Substrate contacts are provided by asparagine 131 and arginine 162. Histidine 186 (proton acceptor) is an active-site residue.

This sequence belongs to the LDH/MDH superfamily. MDH type 3 family.

It carries out the reaction (S)-malate + NAD(+) = oxaloacetate + NADH + H(+). In terms of biological role, catalyzes the reversible oxidation of malate to oxaloacetate. This Nostoc punctiforme (strain ATCC 29133 / PCC 73102) protein is Malate dehydrogenase.